The primary structure comprises 456 residues: Bifunctional protein GlmU (456 aa).

A pyrophosphorylase region spans residues 1–231 (MERTCLAIIL…EEELTGCNTR (231 aa)). UDP-N-acetyl-alpha-D-glucosamine-binding positions include 10–13 (LAAG), Lys24, Gln77, and 82–83 (GT). Asp107 contacts Mg(2+). 4 residues coordinate UDP-N-acetyl-alpha-D-glucosamine: Gly143, Glu157, Asn172, and Asn229. Asn229 contributes to the Mg(2+) binding site. Positions 232–252 (AELAYIERLWQQRRRQELMLA) are linker. The segment at 253–456 (GVSMVAPETV…AARKKVKAAE (204 aa)) is N-acetyltransferase. UDP-N-acetyl-alpha-D-glucosamine is bound by residues Arg318 and Lys336. Residue His348 is the Proton acceptor of the active site. The UDP-N-acetyl-alpha-D-glucosamine site is built by Tyr351 and Asn362. Residues Ala365, 371–372 (NY), Ser390, Ser408, and Arg425 each bind acetyl-CoA.

It in the N-terminal section; belongs to the N-acetylglucosamine-1-phosphate uridyltransferase family. The protein in the C-terminal section; belongs to the transferase hexapeptide repeat family. As to quaternary structure, homotrimer. Requires Mg(2+) as cofactor.

It is found in the cytoplasm. It catalyses the reaction alpha-D-glucosamine 1-phosphate + acetyl-CoA = N-acetyl-alpha-D-glucosamine 1-phosphate + CoA + H(+). The catalysed reaction is N-acetyl-alpha-D-glucosamine 1-phosphate + UTP + H(+) = UDP-N-acetyl-alpha-D-glucosamine + diphosphate. Its pathway is nucleotide-sugar biosynthesis; UDP-N-acetyl-alpha-D-glucosamine biosynthesis; N-acetyl-alpha-D-glucosamine 1-phosphate from alpha-D-glucosamine 6-phosphate (route II): step 2/2. It functions in the pathway nucleotide-sugar biosynthesis; UDP-N-acetyl-alpha-D-glucosamine biosynthesis; UDP-N-acetyl-alpha-D-glucosamine from N-acetyl-alpha-D-glucosamine 1-phosphate: step 1/1. It participates in bacterial outer membrane biogenesis; LPS lipid A biosynthesis. In terms of biological role, catalyzes the last two sequential reactions in the de novo biosynthetic pathway for UDP-N-acetylglucosamine (UDP-GlcNAc). The C-terminal domain catalyzes the transfer of acetyl group from acetyl coenzyme A to glucosamine-1-phosphate (GlcN-1-P) to produce N-acetylglucosamine-1-phosphate (GlcNAc-1-P), which is converted into UDP-GlcNAc by the transfer of uridine 5-monophosphate (from uridine 5-triphosphate), a reaction catalyzed by the N-terminal domain. The sequence is that of Bifunctional protein GlmU from Sinorhizobium fredii (strain NBRC 101917 / NGR234).